A 389-amino-acid chain; its full sequence is Large envelope protein (389 aa).

Position 1 is an N-acetylmethionine (Met1). Gly2 is lipidated: N-myristoyl glycine; by host. The tract at residues 2 to 108 (GQNLSTSNPL…PPLRNTHPQA (107 aa)) is pre-S1. The pre-S stretch occupies residues 2 to 163 (GQNLSTSNPL…FSRIGDPALN (162 aa)). Over 2–170 (GQNLSTSNPL…ALNMENITSG (169 aa)) the chain is Virion surface; in external conformation. Over 2-242 (GQNLSTSNPL…PGYRWMCLRR (241 aa)) the chain is Intravirion; in internal conformation. The interval 77–101 (LPANPPPASTNRQTGRQPTPLSPPL) is disordered. Over residues 85-95 (STNRQTGRQPT) the composition is skewed to polar residues. The interval 109 to 163 (MQWNSTTFHQTLQDPRVRGLYFPAGGSSSGTVNPVPTTASPISSIFSRIGDPALN) is pre-S2. A helical transmembrane segment spans residues 171–191 (LLGPLLVLQAGFFLLTRILTI). The Intravirion; in external conformation segment spans residues 192–242 (PQSLDSWWTSLNFLGGTTVCLGQNSQSPTSNHSPTSCPPTCPGYRWMCLRR). The chain crosses the membrane as a helical span at residues 243 to 263 (FIIFLFILLLCLIFLLVLLDY). The Virion surface segment spans residues 264-337 (QGMLPVCPLI…WASARFSWLS (74 aa)). Asn309 carries N-linked (GlcNAc...) asparagine; by host glycosylation. The helical transmembrane segment at 338–358 (LLVPFVQWFVGLSPTVWLSVI) threads the bilayer. The Intravirion portion of the chain corresponds to 359 to 364 (WMMWYW). The chain crosses the membrane as a helical span at residues 365-387 (GPSLYRILSPFLPLLPIFFCLWV). Residues 388–389 (YI) are Virion surface-facing.

This sequence belongs to the orthohepadnavirus major surface antigen family. In its internal form (Li-HBsAg), interacts with the capsid protein and with the isoform S. Interacts with host chaperone CANX. In terms of assembly, associates with host chaperone CANX through its pre-S2 N glycan; this association may be essential for isoform M proper secretion. As to quaternary structure, interacts with isoform L. Interacts with the antigens of satellite virus HDV (HDVAgs); this interaction is required for encapsidation of HDV genomic RNA. Isoform M is N-terminally acetylated by host at a ratio of 90%, and N-glycosylated by host at the pre-S2 region. In terms of processing, myristoylated.

It localises to the virion membrane. In terms of biological role, the large envelope protein exists in two topological conformations, one which is termed 'external' or Le-HBsAg and the other 'internal' or Li-HBsAg. In its external conformation the protein attaches the virus to cell receptors and thereby initiating infection. This interaction determines the species specificity and liver tropism. This attachment induces virion internalization predominantly through caveolin-mediated endocytosis. The large envelope protein also assures fusion between virion membrane and endosomal membrane. In its internal conformation the protein plays a role in virion morphogenesis and mediates the contact with the nucleocapsid like a matrix protein. The middle envelope protein plays an important role in the budding of the virion. It is involved in the induction of budding in a nucleocapsid independent way. In this process the majority of envelope proteins bud to form subviral lipoprotein particles of 22 nm of diameter that do not contain a nucleocapsid. The sequence is that of Large envelope protein from Hepatitis B virus genotype D (isolate Germany/1-91/1991) (HBV-D).